The following is a 486-amino-acid chain: Membrane-bound lytic murein transglycosylase F (486 aa).

An N-terminal signal peptide occupies residues 1–21 (MKRLKINYILIGVVTLLLALA). The tract at residues 22-268 (LWPNITWRGG…RLEEKYLGHV (247 aa)) is non-LT domain. Residues 269 to 486 (GSFDYVDTKT…AVTPELALNF (218 aa)) form an LT domain region. Residue E313 is part of the active site.

The protein in the N-terminal section; belongs to the bacterial solute-binding protein 3 family. In the C-terminal section; belongs to the transglycosylase Slt family.

It is found in the cell outer membrane. It carries out the reaction Exolytic cleavage of the (1-&gt;4)-beta-glycosidic linkage between N-acetylmuramic acid (MurNAc) and N-acetylglucosamine (GlcNAc) residues in peptidoglycan, from either the reducing or the non-reducing ends of the peptidoglycan chains, with concomitant formation of a 1,6-anhydrobond in the MurNAc residue.. In terms of biological role, murein-degrading enzyme that degrades murein glycan strands and insoluble, high-molecular weight murein sacculi, with the concomitant formation of a 1,6-anhydromuramoyl product. Lytic transglycosylases (LTs) play an integral role in the metabolism of the peptidoglycan (PG) sacculus. Their lytic action creates space within the PG sacculus to allow for its expansion as well as for the insertion of various structures such as secretion systems and flagella. This chain is Membrane-bound lytic murein transglycosylase F, found in Serratia proteamaculans (strain 568).